We begin with the raw amino-acid sequence, 279 residues long: Urease accessory protein UreD (279 aa).

The protein belongs to the UreD family. As to quaternary structure, ureD, UreF and UreG form a complex that acts as a GTP-hydrolysis-dependent molecular chaperone, activating the urease apoprotein by helping to assemble the nickel containing metallocenter of UreC. The UreE protein probably delivers the nickel.

It localises to the cytoplasm. Its function is as follows. Required for maturation of urease via the functional incorporation of the urease nickel metallocenter. In Pseudomonas fluorescens (strain Pf0-1), this protein is Urease accessory protein UreD.